The following is a 203-amino-acid chain: Ribosomal RNA small subunit methyltransferase G (203 aa).

Residues Gly73, Leu78, Val124–Glu125, and Arg138 each bind S-adenosyl-L-methionine.

Belongs to the methyltransferase superfamily. RNA methyltransferase RsmG family.

The protein localises to the cytoplasm. The catalysed reaction is guanosine(527) in 16S rRNA + S-adenosyl-L-methionine = N(7)-methylguanosine(527) in 16S rRNA + S-adenosyl-L-homocysteine. Specifically methylates the N7 position of guanine in position 527 of 16S rRNA. This Glaesserella parasuis serovar 5 (strain SH0165) (Haemophilus parasuis) protein is Ribosomal RNA small subunit methyltransferase G.